The following is a 95-amino-acid chain: MRKYEIMYIIAPNLEESANKEIIERYNKVLTDNGAEILKVDEIGKKRLAYEINDFKDGFYVLLSVQANTEAINEFNRLIKINDNVIRVLVTKDEQ.

The protein belongs to the bacterial ribosomal protein bS6 family.

Its function is as follows. Binds together with bS18 to 16S ribosomal RNA. This is Small ribosomal subunit protein bS6 from Shouchella clausii (strain KSM-K16) (Alkalihalobacillus clausii).